Reading from the N-terminus, the 141-residue chain is Large ribosomal subunit protein uL11 (141 aa).

Belongs to the universal ribosomal protein uL11 family. Part of the ribosomal stalk of the 50S ribosomal subunit. Interacts with L10 and the large rRNA to form the base of the stalk. L10 forms an elongated spine to which L12 dimers bind in a sequential fashion forming a multimeric L10(L12)X complex. One or more lysine residues are methylated.

In terms of biological role, forms part of the ribosomal stalk which helps the ribosome interact with GTP-bound translation factors. In Shouchella clausii (strain KSM-K16) (Alkalihalobacillus clausii), this protein is Large ribosomal subunit protein uL11.